A 245-amino-acid chain; its full sequence is Ribonuclease PH (245 aa).

Phosphate is bound by residues Arg86 and 124–126 (GTR).

The protein belongs to the RNase PH family. In terms of assembly, homohexameric ring arranged as a trimer of dimers.

It carries out the reaction tRNA(n+1) + phosphate = tRNA(n) + a ribonucleoside 5'-diphosphate. In terms of biological role, phosphorolytic 3'-5' exoribonuclease that plays an important role in tRNA 3'-end maturation. Removes nucleotide residues following the 3'-CCA terminus of tRNAs; can also add nucleotides to the ends of RNA molecules by using nucleoside diphosphates as substrates, but this may not be physiologically important. Probably plays a role in initiation of 16S rRNA degradation (leading to ribosome degradation) during starvation. The sequence is that of Ribonuclease PH from Bacillus cereus (strain B4264).